The primary structure comprises 327 residues: Gamma-resorcylate decarboxylase (327 aa).

Glutamate 8 and histidine 10 together coordinate Zn(2+). 2,6-dihydroxybenzoate-binding residues include phenylalanine 23, histidine 164, and aspartate 287. Zn(2+) contacts are provided by histidine 164 and aspartate 287. Residue aspartate 287 is part of the active site.

The protein belongs to the metallo-dependent hydrolases superfamily. ACMSD family. As to quaternary structure, homotetramer. Dimer of dimers. Requires Zn(2+) as cofactor.

It carries out the reaction 2,6-dihydroxybenzoate + H(+) = resorcinol + CO2. It catalyses the reaction 2,3-dihydroxybenzoate + H(+) = catechol + CO2. Its pathway is aromatic compound metabolism. With respect to regulation, inhibited by CuCl(2), monoiodoacetate and diethylpyrocarbonate. Inhibited by 2,3-dihydroxybenzaldehyde, which is an analog of the substrate 2,3-dihydroxybenzoate. Involved in the gamma-resorcylate (2,6-dihydroxybenzoate) catabolism. Catalyzes the reversible decarboxylation of gamma-resorcylate to resorcinol. The reaction is reversible, but equilibrium greatly favors the decarboxylation reaction. Also catalyzes the decarboxylation of 2,3-dihydroxybenzoate to catechol, but does not act on 2,4-dihydroxybenzoate, 2,5-dihydroxybenzoate, 3,4-dihydroxybenzoate, 3,5-dihydroxybenzoate, 2-hydroxybenzoate, or 3-hydroxybenzoate. Only resorcinol is carboxylated by the reverse reaction. The polypeptide is Gamma-resorcylate decarboxylase (Rhizobium sp. (strain MTP-10005)).